The sequence spans 339 residues: Ribosomal RNA small subunit methyltransferase H (339 aa).

Residues 40–42 (GGY), D58, F85, D106, and Q113 contribute to the S-adenosyl-L-methionine site.

It belongs to the methyltransferase superfamily. RsmH family.

It is found in the cytoplasm. It catalyses the reaction cytidine(1402) in 16S rRNA + S-adenosyl-L-methionine = N(4)-methylcytidine(1402) in 16S rRNA + S-adenosyl-L-homocysteine + H(+). Its function is as follows. Specifically methylates the N4 position of cytidine in position 1402 (C1402) of 16S rRNA. The chain is Ribosomal RNA small subunit methyltransferase H from Parvibaculum lavamentivorans (strain DS-1 / DSM 13023 / NCIMB 13966).